The primary structure comprises 207 residues: dITP/XTP pyrophosphatase (207 aa).

Substrate is bound at residue 8 to 13 (TNNKNK). Residue Asp72 is the Proton acceptor of the active site. Asp72 contributes to the Mg(2+) binding site. Residues Ser73, 157-160 (FGYD), Lys180, and 185-186 (HR) contribute to the substrate site.

It belongs to the HAM1 NTPase family. As to quaternary structure, homodimer. Requires Mg(2+) as cofactor.

The catalysed reaction is XTP + H2O = XMP + diphosphate + H(+). The enzyme catalyses dITP + H2O = dIMP + diphosphate + H(+). It carries out the reaction ITP + H2O = IMP + diphosphate + H(+). In terms of biological role, pyrophosphatase that catalyzes the hydrolysis of nucleoside triphosphates to their monophosphate derivatives, with a high preference for the non-canonical purine nucleotides XTP (xanthosine triphosphate), dITP (deoxyinosine triphosphate) and ITP. Seems to function as a house-cleaning enzyme that removes non-canonical purine nucleotides from the nucleotide pool, thus preventing their incorporation into DNA/RNA and avoiding chromosomal lesions. In Lactobacillus johnsonii (strain CNCM I-12250 / La1 / NCC 533), this protein is dITP/XTP pyrophosphatase.